The sequence spans 496 residues: Tyrosine-protein kinase Srms (496 aa).

The SH3 domain maps to 55–116 (PRARLFRALY…PVTYLAKATP (62 aa)). Positions 124 to 216 (WYFSGISRAQ…LIQNPLLQPC (93 aa)) constitute an SH2 domain. One can recognise a Protein kinase domain in the interval 234–495 (FVLRRKLGEG…AINRRLHLGL (262 aa)). ATP is bound by residues 240-248 (LGEGFFGEV) and K262. D354 serves as the catalytic Proton acceptor. Y384 is subject to Phosphotyrosine; by autocatalysis.

The protein belongs to the protein kinase superfamily. Tyr protein kinase family. SRC subfamily. As to quaternary structure, interacts (via the SH2 and SH3 domains) with DOK1. Interacts with KHDRBS1/SAM68 and VIM. In terms of tissue distribution, higher expression in liver, lung, thymus and skin than in brain, kidney, heart and spleen. In skin, highly expressed in keratinocytes. Abundant in lung, liver, spleen, kidney and testis and is also detected in the cerebrum.

The protein resides in the cytoplasm. It catalyses the reaction L-tyrosyl-[protein] + ATP = O-phospho-L-tyrosyl-[protein] + ADP + H(+). Functionally, non-receptor tyrosine-protein kinase which phosphorylates DOK1 on tyrosine residues. Also phosphorylates KHDRBS1/SAM68 and VIM on tyrosine residues. Phosphorylation of KHDRBS1 is EGF-dependent. Phosphorylates OTUB1, promoting deubiquitination of RPTOR. The polypeptide is Tyrosine-protein kinase Srms (Srms) (Mus musculus (Mouse)).